The chain runs to 156 residues: ATP synthase subunit b 1 (156 aa).

A helical transmembrane segment spans residues 5 to 27 (FTLISQAMAFAIFIWFTVRFVWP).

The protein belongs to the ATPase B chain family. In terms of assembly, F-type ATPases have 2 components, F(1) - the catalytic core - and F(0) - the membrane proton channel. F(1) has five subunits: alpha(3), beta(3), gamma(1), delta(1), epsilon(1). F(0) has three main subunits: a(1), b(2) and c(10-14). The alpha and beta chains form an alternating ring which encloses part of the gamma chain. F(1) is attached to F(0) by a central stalk formed by the gamma and epsilon chains, while a peripheral stalk is formed by the delta and b chains.

Its subcellular location is the cell inner membrane. Its function is as follows. F(1)F(0) ATP synthase produces ATP from ADP in the presence of a proton or sodium gradient. F-type ATPases consist of two structural domains, F(1) containing the extramembraneous catalytic core and F(0) containing the membrane proton channel, linked together by a central stalk and a peripheral stalk. During catalysis, ATP synthesis in the catalytic domain of F(1) is coupled via a rotary mechanism of the central stalk subunits to proton translocation. In terms of biological role, component of the F(0) channel, it forms part of the peripheral stalk, linking F(1) to F(0). This Nitrosospira multiformis (strain ATCC 25196 / NCIMB 11849 / C 71) protein is ATP synthase subunit b 1.